The primary structure comprises 79 residues: Probable Fe(2+)-trafficking protein (79 aa).

This sequence belongs to the Fe(2+)-trafficking protein family. Monomer.

Its function is as follows. Could be a mediator in iron transactions between iron acquisition and iron-requiring processes, such as synthesis and/or repair of Fe-S clusters in biosynthetic enzymes. The sequence is that of Probable Fe(2+)-trafficking protein from Blochmanniella floridana.